We begin with the raw amino-acid sequence, 100 residues long: MKLTPREKDKLLIFTAALLAERRRARGLKLNYPEAIAFITAALMEAARDGKTVAEVMHYGTTLLTRNDVMEGVPEMIPDIQVEATFPDGTKLVTVHHPIP.

It belongs to the urease gamma subunit family. Heterotrimer of UreA (gamma), UreB (beta) and UreC (alpha) subunits. Three heterotrimers associate to form the active enzyme.

The protein resides in the cytoplasm. The enzyme catalyses urea + 2 H2O + H(+) = hydrogencarbonate + 2 NH4(+). Its pathway is nitrogen metabolism; urea degradation; CO(2) and NH(3) from urea (urease route): step 1/1. The sequence is that of Urease subunit gamma from Paraburkholderia phytofirmans (strain DSM 17436 / LMG 22146 / PsJN) (Burkholderia phytofirmans).